The sequence spans 699 residues: Elongation factor G 2 (699 aa).

Residues 8–290 (ERYRNIGICA…AVIEYLPSPT (283 aa)) enclose the tr-type G domain. GTP contacts are provided by residues 17-24 (AHVDAGKT), 88-92 (DTPGH), and 142-145 (NKMD).

Belongs to the TRAFAC class translation factor GTPase superfamily. Classic translation factor GTPase family. EF-G/EF-2 subfamily.

Its subcellular location is the cytoplasm. Functionally, catalyzes the GTP-dependent ribosomal translocation step during translation elongation. During this step, the ribosome changes from the pre-translocational (PRE) to the post-translocational (POST) state as the newly formed A-site-bound peptidyl-tRNA and P-site-bound deacylated tRNA move to the P and E sites, respectively. Catalyzes the coordinated movement of the two tRNA molecules, the mRNA and conformational changes in the ribosome. This is Elongation factor G 2 from Colwellia psychrerythraea (strain 34H / ATCC BAA-681) (Vibrio psychroerythus).